The chain runs to 121 residues: Large ribosomal subunit protein bL19 (121 aa).

This sequence belongs to the bacterial ribosomal protein bL19 family.

This protein is located at the 30S-50S ribosomal subunit interface and may play a role in the structure and function of the aminoacyl-tRNA binding site. This chain is Large ribosomal subunit protein bL19, found in Porphyromonas gingivalis (strain ATCC BAA-308 / W83).